Consider the following 306-residue polypeptide: Oxygen-dependent coproporphyrinogen-III oxidase (306 aa).

Residue Ser-94 participates in substrate binding. The a divalent metal cation site is built by His-98 and His-108. His-108 serves as the catalytic Proton donor. 110–112 (NVR) is a binding site for substrate. The a divalent metal cation site is built by His-147 and His-177. An important for dimerization region spans residues 242-277 (YVEFNLVYDRGTLFGLQTGGRTESILMSMPPLVRWE). 260–262 (GGR) contributes to the substrate binding site.

The protein belongs to the aerobic coproporphyrinogen-III oxidase family. In terms of assembly, homodimer. It depends on a divalent metal cation as a cofactor.

Its subcellular location is the cytoplasm. It catalyses the reaction coproporphyrinogen III + O2 + 2 H(+) = protoporphyrinogen IX + 2 CO2 + 2 H2O. It participates in porphyrin-containing compound metabolism; protoporphyrin-IX biosynthesis; protoporphyrinogen-IX from coproporphyrinogen-III (O2 route): step 1/1. Functionally, involved in the heme biosynthesis. Catalyzes the aerobic oxidative decarboxylation of propionate groups of rings A and B of coproporphyrinogen-III to yield the vinyl groups in protoporphyrinogen-IX. This Shewanella woodyi (strain ATCC 51908 / MS32) protein is Oxygen-dependent coproporphyrinogen-III oxidase.